The sequence spans 481 residues: Chromosomal replication initiator protein DnaA (481 aa).

The interval 1–74 (MSQDLWSFCL…ELGAEFHGAP (74 aa)) is domain I, interacts with DnaA modulators. The domain II stretch occupies residues 74–144 (PIEIELVLPA…TASDLAYEKT (71 aa)). The tract at residues 101–123 (AGPAPAPTPSQAPAATAAAPAVV) is disordered. The span at 111–123 (QAPAATAAAPAVV) shows a compositional bias: low complexity. The domain III, AAA+ region stretch occupies residues 145–361 (RLNADFTFDT…GALNKVVAFA (217 aa)). ATP is bound by residues G189, G191, K192, and T193. The domain IV, binds dsDNA stretch occupies residues 362–481 (RFHGRGITLE…VHVLTQVLRG (120 aa)).

Belongs to the DnaA family. In terms of assembly, oligomerizes as a right-handed, spiral filament on DNA at oriC.

Its subcellular location is the cytoplasm. Functionally, plays an essential role in the initiation and regulation of chromosomal replication. ATP-DnaA binds to the origin of replication (oriC) to initiate formation of the DNA replication initiation complex once per cell cycle. Binds the DnaA box (a 9 base pair repeat at the origin) and separates the double-stranded (ds)DNA. Forms a right-handed helical filament on oriC DNA; dsDNA binds to the exterior of the filament while single-stranded (ss)DNA is stabiized in the filament's interior. The ATP-DnaA-oriC complex binds and stabilizes one strand of the AT-rich DNA unwinding element (DUE), permitting loading of DNA polymerase. After initiation quickly degrades to an ADP-DnaA complex that is not apt for DNA replication. Binds acidic phospholipids. This chain is Chromosomal replication initiator protein DnaA, found in Aromatoleum aromaticum (strain DSM 19018 / LMG 30748 / EbN1) (Azoarcus sp. (strain EbN1)).